Consider the following 617-residue polypeptide: Proline--tRNA ligase (617 aa).

It belongs to the class-II aminoacyl-tRNA synthetase family. ProS type 1 subfamily. Homodimer.

It localises to the cytoplasm. The catalysed reaction is tRNA(Pro) + L-proline + ATP = L-prolyl-tRNA(Pro) + AMP + diphosphate. In terms of biological role, catalyzes the attachment of proline to tRNA(Pro) in a two-step reaction: proline is first activated by ATP to form Pro-AMP and then transferred to the acceptor end of tRNA(Pro). As ProRS can inadvertently accommodate and process non-cognate amino acids such as alanine and cysteine, to avoid such errors it has two additional distinct editing activities against alanine. One activity is designated as 'pretransfer' editing and involves the tRNA(Pro)-independent hydrolysis of activated Ala-AMP. The other activity is designated 'posttransfer' editing and involves deacylation of mischarged Ala-tRNA(Pro). The misacylated Cys-tRNA(Pro) is not edited by ProRS. This is Proline--tRNA ligase from Streptococcus pneumoniae (strain 70585).